Reading from the N-terminus, the 480-residue chain is Major capsid protein (480 aa).

The protein localises to the virion. Functionally, major protein of the capsid. The polypeptide is Major capsid protein (MCP-1) (Trichoplusia ni ascovirus 2c (TnAV-2c)).